Consider the following 327-residue polypeptide: Annexin A8 (327 aa).

4 Annexin repeats span residues 21–92 (FNPV…ALMY), 93–164 (PPYR…CLLQ), 177–249 (GLAL…TIVK), and 253–324 (NLHC…SLVG). Ca(2+)-binding residues include M266, G268, G270, and D310.

Belongs to the annexin family.

Its function is as follows. This protein is an anticoagulant protein that acts as an indirect inhibitor of the thromboplastin-specific complex, which is involved in the blood coagulation cascade. The chain is Annexin A8 (ANXA8) from Oryctolagus cuniculus (Rabbit).